An 814-amino-acid chain; its full sequence is Rap guanine nucleotide exchange factor 5 (814 aa).

A DEP domain is found at 43-118 (LQAADLVKDR…DNYVFYQFSS (76 aa)). The region spanning 301-434 (ARYVVVSGTP…ELKEFQKILG (134 aa)) is the N-terminal Ras-GEF domain. The 236-residue stretch at 578–813 (NTWDLALELM…FELSHRLEPR (236 aa)) folds into the Ras-GEF domain.

It is found in the nucleus. In terms of biological role, guanine nucleotide exchange factor (GEF) for RAP1A, RAP2A and MRAS/M-Ras-GTP. Its association with MRAS inhibits Rap1 activation. This Mus musculus (Mouse) protein is Rap guanine nucleotide exchange factor 5 (Rapgef5).